A 325-amino-acid polypeptide reads, in one-letter code: Olfactory receptor 5T18 (325 aa).

The Extracellular portion of the chain corresponds to 1 to 22 (MRNITEATFFVLKGLTDNNELQ). Asn-3 is a glycosylation site (N-linked (GlcNAc...) asparagine). The next 2 helical transmembrane spans lie at 23 to 43 (IILF…NVGL) and 44 to 64 (IILV…LSVL). The Extracellular segment spans residues 65-97 (SSVDACYSTDITPNMLVGFMSKSKIISFYGCAT). The cysteines at positions 95 and 187 are disulfide-linked. A helical membrane pass occupies residues 98–118 (QMFLAVTFGTTECFLLAAMAY). Residues 119 to 139 (DRYVAIHDPLLYAVSMSPRVY) lie on the Cytoplasmic side of the membrane. Residues 140–160 (IPLIIASYAGGIVHAIIHTVA) form a helical membrane-spanning segment. The Extracellular segment spans residues 161 to 194 (TFSLSFCRSNEVKHIFCDIPPLLAISCSETYVNE). A helical transmembrane segment spans residues 195 to 215 (LLLFFFVSFIELVTILIVLVS). The Cytoplasmic segment spans residues 216 to 234 (YAFILLSILKMNSSEGRRK). The helical transmembrane segment at 235–255 (VFSTCGAHLTAVSIYYGTILF) threads the bilayer. Residues 256–269 (MYVRPSSNYSLEHD) lie on the Extracellular side of the membrane. The chain crosses the membrane as a helical span at residues 270 to 290 (MIVSTFYTIGIPMLNPIIYSL). Topologically, residues 291–325 (RNKDVKEAMKRVLRKKINIKHRIKKLNDFSVFLMP) are cytoplasmic.

This sequence belongs to the G-protein coupled receptor 1 family.

Its subcellular location is the cell membrane. Functionally, potential odorant receptor. In Mus musculus (Mouse), this protein is Olfactory receptor 5T18.